The sequence spans 396 residues: S-adenosylmethionine synthase 4 (396 aa).

E13 provides a ligand contact to Mg(2+). Residue H19 coordinates ATP. Residue E47 participates in K(+) binding. L-methionine contacts are provided by E60 and Q103. Residues 171–173, 239–242, D250, 256–257, A273, K277, and K281 contribute to the ATP site; these read DGK, SGRF, and RK. D250 is an L-methionine binding site. Residue K281 coordinates L-methionine.

It belongs to the AdoMet synthase family. In terms of assembly, homotetramer. Mn(2+) serves as cofactor. Mg(2+) is required as a cofactor. Requires Co(2+) as cofactor. The cofactor is K(+). As to expression, expressed in roots, stems and leaves (at protein level).

It localises to the cytoplasm. The catalysed reaction is L-methionine + ATP + H2O = S-adenosyl-L-methionine + phosphate + diphosphate. Its pathway is amino-acid biosynthesis; S-adenosyl-L-methionine biosynthesis; S-adenosyl-L-methionine from L-methionine: step 1/1. In terms of biological role, catalyzes the formation of S-adenosylmethionine from methionine and ATP. The reaction comprises two steps that are both catalyzed by the same enzyme: formation of S-adenosylmethionine (AdoMet) and triphosphate, and subsequent hydrolysis of the triphosphate. May be involved in the synthesis of betain in response to abiotic stress such as high salinity. The polypeptide is S-adenosylmethionine synthase 4 (SAMS4) (Atriplex nummularia (Old man saltbush)).